A 460-amino-acid chain; its full sequence is NADH-quinone oxidoreductase subunit N (460 aa).

The next 13 membrane-spanning stretches (helical) occupy residues 2-22 (LLPE…AVML), 28-48 (IVAN…LKYS), 65-85 (ANIA…MIIY), 104-124 (ILLS…LLLF), 155-175 (FILG…IYGF), 196-216 (LGLV…LSSA), 230-250 (PIAS…AILL), 263-283 (ISYN…ALGA), 292-312 (LMAY…LLRT), 321-341 (LYML…IMLL), 363-383 (IAAA…LAGF), 400-420 (LLAY…LKII), and 438-458 (YGLL…SFII).

This sequence belongs to the complex I subunit 2 family. In terms of assembly, NDH-1 is composed of 14 different subunits. Subunits NuoA, H, J, K, L, M, N constitute the membrane sector of the complex.

Its subcellular location is the cell inner membrane. The enzyme catalyses a quinone + NADH + 5 H(+)(in) = a quinol + NAD(+) + 4 H(+)(out). In terms of biological role, NDH-1 shuttles electrons from NADH, via FMN and iron-sulfur (Fe-S) centers, to quinones in the respiratory chain. The immediate electron acceptor for the enzyme in this species is believed to be ubiquinone. Couples the redox reaction to proton translocation (for every two electrons transferred, four hydrogen ions are translocated across the cytoplasmic membrane), and thus conserves the redox energy in a proton gradient. The protein is NADH-quinone oxidoreductase subunit N of Rickettsia bellii (strain RML369-C).